A 140-amino-acid chain; its full sequence is uncharacterized protein (140 aa).

Residues 21-42 (CPYCNYTNADVKAIKKHIKSKH) form a C2H2-type zinc finger.

This sequence to M.jannaschii MJECL27.

This is an uncharacterized protein from Methanocaldococcus jannaschii (strain ATCC 43067 / DSM 2661 / JAL-1 / JCM 10045 / NBRC 100440) (Methanococcus jannaschii).